A 225-amino-acid polypeptide reads, in one-letter code: Polyadenylate-binding protein 2 (225 aa).

Acidic residues predominate over residues 1-36; the sequence is MADEDISLNEDQLLESMEETNGEQETEIVTETEEEG. The interval 1–42 is disordered; it reads MADEDISLNEDQLLESMEETNGEQETEIVTETEEEGSMQIDP. Residues 14-74 are a coiled coil; that stretch reads LESMEETNGE…QSEVDKQMAG (61 aa). The RRM domain maps to 96–173; sequence RSVYVGNVDY…RQIKVMSKRT (78 aa).

It localises to the nucleus. The protein resides in the cytoplasm. In terms of biological role, involved in the 3'-end formation of mRNA precursors (pre-mRNA) by the addition of a poly(A) tail of 200-250 nt to the upstream cleavage product. Stimulates poly(A) polymerase (PAPOLA) conferring processivity on the poly(A) tail elongation reaction and also controls the poly(A) tail length. Increases the affinity of poly(A) polymerase for RNA. Binds to poly(A) and to poly(G) with high affinity. May protect the poly(A) tail from degradation. The sequence is that of Polyadenylate-binding protein 2 from Drosophila pseudoobscura pseudoobscura (Fruit fly).